A 364-amino-acid polypeptide reads, in one-letter code: Eukaryotic translation initiation factor 3 subunit H (364 aa).

One can recognise an MPN domain in the interval 13–162; sequence VQVDALVAIK…LRAYRLSPSF (150 aa).

The protein belongs to the eIF-3 subunit H family. In terms of assembly, component of the eukaryotic translation initiation factor 3 (eIF-3) complex.

The protein localises to the cytoplasm. Functionally, component of the eukaryotic translation initiation factor 3 (eIF-3) complex, which is involved in protein synthesis of a specialized repertoire of mRNAs and, together with other initiation factors, stimulates binding of mRNA and methionyl-tRNAi to the 40S ribosome. The eIF-3 complex specifically targets and initiates translation of a subset of mRNAs involved in cell proliferation. This is Eukaryotic translation initiation factor 3 subunit H from Phaeosphaeria nodorum (strain SN15 / ATCC MYA-4574 / FGSC 10173) (Glume blotch fungus).